Here is a 108-residue protein sequence, read N- to C-terminus: Heme oxygenase (staphylobilin-producing) 2 (108 aa).

Residues 2–93 (FMAENRLQLQ…DDDGQQSPIL (92 aa)) form the ABM domain. Fe cation is bound at residue Asn6. Heme-binding positions include 21–28 (RFYNRQGI) and His76.

This sequence belongs to the antibiotic biosynthesis monooxygenase family. Heme-degrading monooxygenase IsdG subfamily. In terms of assembly, homodimer.

Its subcellular location is the cytoplasm. The catalysed reaction is heme b + 5 AH2 + 4 O2 + 2 H(+) = delta-staphylobilin + Fe(2+) + formaldehyde + 5 A + 4 H2O. It catalyses the reaction heme b + 5 AH2 + 4 O2 + 2 H(+) = beta-staphylobilin + Fe(2+) + formaldehyde + 5 A + 4 H2O. Functionally, allows bacterial pathogens to use the host heme as an iron source. Catalyzes the oxidative degradation of the heme macrocyclic porphyrin ring to the oxo-bilirubin chromophore staphylobilin (a mixture of the linear tetrapyrroles 5-oxo-delta-bilirubin and 15-oxo-beta-bilirubin) in the presence of a suitable electron donor such as ascorbate or NADPH--cytochrome P450 reductase, with subsequent release of free iron. This Staphylococcus aureus (strain MRSA252) protein is Heme oxygenase (staphylobilin-producing) 2 (isdI).